The primary structure comprises 527 residues: MKKSYLATSLTLSIAVGVSGFTSVPAFAKTKIDYHKQWDTPQYIGEVWEPEGAKGDDVVWSYLEKYKDEFRIQGNVEDHFEIVNEARNKETDTKHYRLQEVYNGIPIYGFQQTVHIDADGNVTSFLGQFIPDLDSNKQLKKKPKLNEQKAVKQAIKDVEGEVGEKPDFIQDPEAKLYIYVHEDESYLAYAVELNFLDPEPGRWMYFIDAHSGDVINKYNMLDHVTATGKGVLGDTKQFETTKQGSTYMLKDTTRGKGIETYTANNRTSLPGTLMTDSDNYWTDGAAVDAHAHAQKTYDYFRNVHNRNSYDGNGAVIRSTVHYSTRYNNAFWNGSQMVYGDGDGTTFLPLSGGLDVVAHELTHAVTERTAGLVYQNESGALNESMSDIFGAMVDNDDWLMGEDIYTPGRSGDALRSLQDPAAYGDPDHYSKRYTGSQDNGGVHTNSGINNKAAYLLAEGGTHYGVRVNGIGRTDTAKIYYHALTHYLTPYSNFSAMRRAAVLSATDLFGANSRQVQAVNAAYDAVGVK.

Positions 1 to 28 (MKKSYLATSLTLSIAVGVSGFTSVPAFA) are cleaved as a signal peptide. Positions 29 to 223 (KTKIDYHKQW…VINKYNMLDH (195 aa)) are cleaved as a propeptide — activation peptide. Residues aspartate 276, aspartate 278, and aspartate 354 each contribute to the Ca(2+) site. Residue histidine 358 participates in Zn(2+) binding. Residue glutamate 359 is part of the active site. Positions 362 and 382 each coordinate Zn(2+). Ca(2+) is bound by residues aspartate 393, asparagine 394, aspartate 396, glutamate 401, tyrosine 404, threonine 405, and aspartate 411. The active-site Proton donor is the histidine 442.

This sequence belongs to the peptidase M4 family. Ca(2+) serves as cofactor. Requires Zn(2+) as cofactor.

The protein localises to the secreted. The enzyme catalyses Similar, but not identical, to that of thermolysin.. Extracellular zinc metalloprotease. This is Bacillolysin (npr) from Brevibacillus brevis (Bacillus brevis).